A 403-amino-acid chain; its full sequence is 4-hydroxy-3-methylbut-2-en-1-yl diphosphate synthase (flavodoxin) (403 aa).

The span at 1 to 16 shows a compositional bias: basic and acidic residues; it reads MNTENPIEKPFRKTGD. A disordered region spans residues 1–31; that stretch reads MNTENPIEKPFRKTGDPVDLTSESPLHPRRK. [4Fe-4S] cluster is bound by residues C291, C294, C326, and E333.

Belongs to the IspG family. [4Fe-4S] cluster serves as cofactor.

The enzyme catalyses (2E)-4-hydroxy-3-methylbut-2-enyl diphosphate + oxidized [flavodoxin] + H2O + 2 H(+) = 2-C-methyl-D-erythritol 2,4-cyclic diphosphate + reduced [flavodoxin]. Its pathway is isoprenoid biosynthesis; isopentenyl diphosphate biosynthesis via DXP pathway; isopentenyl diphosphate from 1-deoxy-D-xylulose 5-phosphate: step 5/6. Converts 2C-methyl-D-erythritol 2,4-cyclodiphosphate (ME-2,4cPP) into 1-hydroxy-2-methyl-2-(E)-butenyl 4-diphosphate. The sequence is that of 4-hydroxy-3-methylbut-2-en-1-yl diphosphate synthase (flavodoxin) from Bifidobacterium longum (strain NCC 2705).